A 203-amino-acid chain; its full sequence is V-type ATP synthase subunit D (203 aa).

The protein belongs to the V-ATPase D subunit family.

Its function is as follows. Produces ATP from ADP in the presence of a proton gradient across the membrane. The chain is V-type ATP synthase subunit D from Streptococcus pneumoniae (strain CGSP14).